Consider the following 230-residue polypeptide: Type 4 apparatus protein DotY (230 aa).

The disordered stretch occupies residues 202–230 (EPKALETKREEIRQEIESGAEAPTTQSIR). Basic and acidic residues predominate over residues 204–217 (KALETKREEIRQEI).

The T4BSS is a complex nanomachine composed of several subcomplexes. This subunit is part of the Type IV Coupling Complex (T4CC), a subcomplex composed of the DotLMNYZ core and the IcmSW-LvgA adapter subunits, linked by the C-terminal tail of DotL. Six DotLMNYZ hetero-pentameric units may assemble into a hexameric nanomachine, forming an inner membrane channel for effectors to pass through. Interacts exclusively with DotZ. DotY and DotZ are co-dependent for the assembly into the T4CC.

Its subcellular location is the cytoplasm. Functionally, component of the Dot/Icm type IVB secretion system (T4BSS), which is used to inject bacterial effector proteins into eukaryotic host cells. Part of a subcomplex which recruits effector proteins and delivers them to the core transmembrane subcomplex. DotY and DotZ play a role in effector translocation, but are not essential and do not influence the stability of the subcomplex main components. The DotY/DotZ main function is to optimize secretion by modulating the delivery trajectory of the IcmSW module and the localization of the machinery to the poles. In Legionella pneumophila subsp. pneumophila (strain Philadelphia 1 / ATCC 33152 / DSM 7513), this protein is Type 4 apparatus protein DotY.